The primary structure comprises 388 residues: Sporulation-specific mitogen-activated protein kinase SMK1 (388 aa).

Positions Tyr-38–Leu-337 constitute a Protein kinase domain. ATP is bound by residues Leu-44–Val-52 and Lys-69. Asp-166 serves as the catalytic Proton acceptor. The TXY motif lies at Thr-207–Tyr-209.

The protein belongs to the protein kinase superfamily. CMGC Ser/Thr protein kinase family. MAP kinase subfamily. Interacts with GSC2. The cofactor is Mg(2+). Post-translationally, dually phosphorylated on Thr-207 and Tyr-209, which activates the enzyme.

The enzyme catalyses L-seryl-[protein] + ATP = O-phospho-L-seryl-[protein] + ADP + H(+). The catalysed reaction is L-threonyl-[protein] + ATP = O-phospho-L-threonyl-[protein] + ADP + H(+). Activated by tyrosine and threonine phosphorylation. Functionally, required for spore wall assembly. Required for proper deposition of the two outer layers of the spore wall, the chitosan and dityrosine layers. Negatively regulates GSC2, an alternate catalytic subunit of the 1,3-beta-glucan synthase (GS). Participates in a developmentally regulated signal transduction pathway that coordinates cytodifferentiation events with the transcriptional program. In Saccharomyces cerevisiae (strain ATCC 204508 / S288c) (Baker's yeast), this protein is Sporulation-specific mitogen-activated protein kinase SMK1 (SMK1).